The following is a 288-amino-acid chain: Polyamine aminopropyltransferase (288 aa).

Positions 9-238 constitute a PABS domain; that stretch reads ETLHDQFGQY…GIMTFAWATD (230 aa). Gln-33 is a binding site for S-methyl-5'-thioadenosine. Positions 64 and 88 each coordinate spermidine. S-methyl-5'-thioadenosine contacts are provided by residues Glu-108 and 140 to 141; that span reads DG. The active-site Proton acceptor is the Asp-158. 158–161 is a binding site for spermidine; it reads DCTD. Pro-165 lines the S-methyl-5'-thioadenosine pocket.

The protein belongs to the spermidine/spermine synthase family. As to quaternary structure, homodimer or homotetramer.

It is found in the cytoplasm. The enzyme catalyses S-adenosyl 3-(methylsulfanyl)propylamine + putrescine = S-methyl-5'-thioadenosine + spermidine + H(+). The protein operates within amine and polyamine biosynthesis; spermidine biosynthesis; spermidine from putrescine: step 1/1. Its function is as follows. Catalyzes the irreversible transfer of a propylamine group from the amino donor S-adenosylmethioninamine (decarboxy-AdoMet) to putrescine (1,4-diaminobutane) to yield spermidine. This chain is Polyamine aminopropyltransferase, found in Escherichia coli (strain ATCC 8739 / DSM 1576 / NBRC 3972 / NCIMB 8545 / WDCM 00012 / Crooks).